Reading from the N-terminus, the 200-residue chain is NADH-quinone oxidoreductase subunit C (200 aa).

It belongs to the complex I 30 kDa subunit family. In terms of assembly, NDH-1 is composed of 14 different subunits. Subunits NuoB, C, D, E, F, and G constitute the peripheral sector of the complex.

Its subcellular location is the cell inner membrane. The catalysed reaction is a quinone + NADH + 5 H(+)(in) = a quinol + NAD(+) + 4 H(+)(out). Functionally, NDH-1 shuttles electrons from NADH, via FMN and iron-sulfur (Fe-S) centers, to quinones in the respiratory chain. The immediate electron acceptor for the enzyme in this species is believed to be ubiquinone. Couples the redox reaction to proton translocation (for every two electrons transferred, four hydrogen ions are translocated across the cytoplasmic membrane), and thus conserves the redox energy in a proton gradient. The protein is NADH-quinone oxidoreductase subunit C of Paraburkholderia phytofirmans (strain DSM 17436 / LMG 22146 / PsJN) (Burkholderia phytofirmans).